Reading from the N-terminus, the 258-residue chain is Methionine aminopeptidase (258 aa).

Residue H84 coordinates substrate. A divalent metal cation-binding residues include D102, D113, and H176. Residue H183 participates in substrate binding. A divalent metal cation contacts are provided by E211 and E242.

This sequence belongs to the peptidase M24A family. Methionine aminopeptidase type 1 subfamily. As to quaternary structure, monomer. Co(2+) is required as a cofactor. Requires Zn(2+) as cofactor. It depends on Mn(2+) as a cofactor. The cofactor is Fe(2+).

It catalyses the reaction Release of N-terminal amino acids, preferentially methionine, from peptides and arylamides.. Functionally, removes the N-terminal methionine from nascent proteins. The N-terminal methionine is often cleaved when the second residue in the primary sequence is small and uncharged (Met-Ala-, Cys, Gly, Pro, Ser, Thr, or Val). Requires deformylation of the N(alpha)-formylated initiator methionine before it can be hydrolyzed. This chain is Methionine aminopeptidase, found in Aquifex aeolicus (strain VF5).